The chain runs to 119 residues: Parathyroid hormone (119 aa).

The first 25 residues, 1–25 (MTSTKNLAKAIVILYAICFFTNSDG), serve as a signal peptide directing secretion. A propeptide spanning residues 26 to 31 (RPMMKR) is cleaved from the precursor.

This sequence belongs to the parathyroid hormone family. As to quaternary structure, interacts with PTH1R (via N-terminal extracellular domain).

It localises to the secreted. Its function is as follows. Parathyroid hormone elevates calcium level by dissolving the salts in bone and preventing their renal excretion. Acts by binding to its receptor, PTH1R, activating G protein-coupled receptor signaling. Stimulates [1-14C]-2-deoxy-D-glucose (2DG) transport and glycogen synthesis in osteoblastic cells. The sequence is that of Parathyroid hormone from Gallus gallus (Chicken).